A 127-amino-acid polypeptide reads, in one-letter code: MSNRKPYVREVKRTWWKDHPFYRFYMLREATVLPLILFTLFLTVGLGSLVKGPEAWQTWLNFMANPVVIAINIVALLGSLLHAHTFFSMMPQVMPIRLKGKPVDKKIIVLAQWAAVAFISLIVLIVV.

Transmembrane regions (helical) follow at residues 30 to 50 (ATVL…GSLV), 67 to 87 (VVIA…HTFF), and 107 to 127 (IIVL…LIVV).

Belongs to the FrdC family. As to quaternary structure, part of an enzyme complex containing four subunits: a flavoprotein (FrdA), an iron-sulfur protein (FrdB), and two hydrophobic anchor proteins (FrdC and FrdD).

It localises to the cell inner membrane. In terms of biological role, anchors the catalytic components of the fumarate reductase complex to the cell membrane, binds quinones. The sequence is that of Fumarate reductase subunit C from Vibrio vulnificus (strain CMCP6).